The sequence spans 468 residues: 6-phospho-beta-galactosidase (468 aa).

Residues Q19, H116, N159, E160, and N297 each contribute to the D-galactose 6-phosphate site. E160 functions as the Proton donor in the catalytic mechanism. The Nucleophile role is filled by E375. D-galactose 6-phosphate contacts are provided by S428, W429, K435, and Y437.

Belongs to the glycosyl hydrolase 1 family.

It catalyses the reaction a 6-phospho-beta-D-galactoside + H2O = D-galactose 6-phosphate + an alcohol. It functions in the pathway carbohydrate metabolism; lactose degradation; D-galactose 6-phosphate and beta-D-glucose from lactose 6-phosphate: step 1/1. In Streptococcus pyogenes serotype M5 (strain Manfredo), this protein is 6-phospho-beta-galactosidase.